A 110-amino-acid chain; its full sequence is MALSNILLFKIEFYIFSSLLMIKKKLVFSILKLLQLTEKDSKILVNESLTNKNFSKLIEFLDNYKVEKAKSITLQQLQSVLQNIKLNNSQKSEIIENIYSKLDAANHLIF.

The protein localises to the plastid. Its subcellular location is the chloroplast. This is an uncharacterized protein from Auxenochlorella pyrenoidosa (Freshwater green alga).